A 485-amino-acid chain; its full sequence is Cytochrome P450 monooxygenase tndB (485 aa).

A helical membrane pass occupies residues 20–40 (VYGISAVIAVGLAIYSASLAI). C481 lines the heme pocket.

Belongs to the cytochrome P450 family. Heme is required as a cofactor.

It localises to the membrane. It participates in secondary metabolite biosynthesis; terpenoid biosynthesis. Cytochrome P450 monooxygenase; part of the gene cluster that mediates the biosynthesis of talaronoid C, a fusicoccane diterpenoid with an unprecedented tricyclic 5/8/6 ring system. The first step in the pathway is performed by the fusicoccadiene synthase tndC that possesses both prenyl transferase and terpene cyclase activity, converting isopentenyl diphosphate and dimethylallyl diphosphate into geranylgeranyl diphosphate (GGDP) and further converting GGDP into talarodiene, a precursor for talaronoid C. The remaining enzymes from the cluster include the cytochrome P450 monooxygenase tndB, the aldehyde reductase tndE and the alcohol dehydrogenase tndF that are involved in the conversion of talarodiene into talaronoid C. This is Cytochrome P450 monooxygenase tndB from Aspergillus flavipes.